We begin with the raw amino-acid sequence, 1503 residues long: E3 ubiquitin-protein ligase listerin (1503 aa).

14 HEAT repeats span residues 52-89 (SGIDDETRIVMRKLTKKDCQTREKGLRELTNIIAETSS), 93-129 (CYEHFCGLVPQLSTDGSPTVRLLTMKTITLFLVKLEK), 133-170 (KGLKKIIPMVLFARCDVTNGVAAAAGAVIRDGFEADKK), 280-318 (LNTPSIVTYIQNHLDSQTFTPECSTAWEGMIILLPSAQF), 323-345 (SLQNGIYPRFLNVIRKKGNHWRV), 346-384 (LQHFLLPAVVLLLKEMGSLENNMKVLGTIMESFTDNLPW), 552-589 (GDIVRLIKLLLENQEIKSLNISVKNDHVGRRLLLTGGS), 640-663 (AENVEFLITLLRKMKSTDVSNEAE), 664-700 (KNVLILKLFTAIFESDEDAKSEHYNCLSEHLTSDFNS), 845-882 (LEKRYSLVALTEELQRSRREIEERLIRSDEVRFKLDDS), 1022-1065 (TLFI…RMFR), 1078-1117 (RTLLKAMFTLVEFPTNVPNDSVVTREFVPELSVFKYSLLE), 1141-1183 (AAAK…VMIS), and 1302-1340 (FKSITLLPAAVRLFHKNIPNNFKPIFQEVVTKHASKLLI). The RING-type zinc-finger motif lies at 1446–1499 (CTICMMTVHQQTNQLPKVKCKQCKNRFHSNCLVSSFHTYKWFESSNQSTCPLCR).

Belongs to the LTN1 family. In terms of assembly, component of the ribosome quality control complex (RQC), composed of at least the E3 ubiquitin ligase ltn1 and nemf. The complex probably also contains tcf25 as well as vcp/p97 and its ubiquitin-binding cofactors. RQC forms a stable complex with 60S ribosomal subunits.

Its subcellular location is the cytoplasm. It is found in the cytosol. It catalyses the reaction S-ubiquitinyl-[E2 ubiquitin-conjugating enzyme]-L-cysteine + [acceptor protein]-L-lysine = [E2 ubiquitin-conjugating enzyme]-L-cysteine + N(6)-ubiquitinyl-[acceptor protein]-L-lysine.. It participates in protein modification; protein ubiquitination. Functionally, E3 ubiquitin-protein ligase. Component of the ribosome quality control complex (RQC), a ribosome-associated complex that mediates ubiquitination and extraction of incompletely synthesized nascent chains for proteasomal degradation. Ubiquitination leads to vcp/p97 recruitment for extraction and degradation of the incomplete translation product. In Caenorhabditis briggsae, this protein is E3 ubiquitin-protein ligase listerin.